We begin with the raw amino-acid sequence, 187 residues long: ATP synthase subunit b, chloroplastic (187 aa).

Residues 34–56 form a helical membrane-spanning segment; it reads IINLSVVLGLVFTLGRNFLISLL.

Belongs to the ATPase B chain family. F-type ATPases have 2 components, F(1) - the catalytic core - and F(0) - the membrane proton channel. F(1) has five subunits: alpha(3), beta(3), gamma(1), delta(1), epsilon(1). F(0) has four main subunits: a(1), b(1), b'(1) and c(10-14). The alpha and beta chains form an alternating ring which encloses part of the gamma chain. F(1) is attached to F(0) by a central stalk formed by the gamma and epsilon chains, while a peripheral stalk is formed by the delta, b and b' chains.

It localises to the plastid. It is found in the chloroplast thylakoid membrane. Functionally, f(1)F(0) ATP synthase produces ATP from ADP in the presence of a proton or sodium gradient. F-type ATPases consist of two structural domains, F(1) containing the extramembraneous catalytic core and F(0) containing the membrane proton channel, linked together by a central stalk and a peripheral stalk. During catalysis, ATP synthesis in the catalytic domain of F(1) is coupled via a rotary mechanism of the central stalk subunits to proton translocation. In terms of biological role, component of the F(0) channel, it forms part of the peripheral stalk, linking F(1) to F(0). The chain is ATP synthase subunit b, chloroplastic from Pleurastrum terricola (Filamentous green alga).